Here is a 76-residue protein sequence, read N- to C-terminus: Conotoxin Cal29b (76 aa).

Residues 1-43 (MKLTCVLIVAVLILAACQFTAANMARYGKTQIARSDVKSIDAR) form the signal peptide.

The protein belongs to the conotoxin O1 superfamily. In terms of processing, may contain 4 disulfide bonds. In terms of tissue distribution, expressed by the venom duct.

It is found in the secreted. In terms of biological role, is able to inhibit the growth of Mycobacterium tuberculosis (MIC=0.22-3.52 uM against strain H37Rv and 2 multidrug-resistant strains). May also show neurotoxic activity. The chain is Conotoxin Cal29b from Californiconus californicus (California cone).